We begin with the raw amino-acid sequence, 198 residues long: Phosphoheptose isomerase (198 aa).

The SIS domain occupies 40 to 198; it reads IVTALRSGRK…IEAALMQDLS (159 aa). Substrate is bound at residue 55–57; that stretch reads NGG. The Zn(2+) site is built by H64 and E68. Residues E68, 97-98, 123-125, S128, and Q175 each bind substrate; these read ND and STS. Residues Q175 and H183 each contribute to the Zn(2+) site.

The protein belongs to the SIS family. GmhA subfamily. Homotetramer. The cofactor is Zn(2+).

Its subcellular location is the cytoplasm. It carries out the reaction 2 D-sedoheptulose 7-phosphate = D-glycero-alpha-D-manno-heptose 7-phosphate + D-glycero-beta-D-manno-heptose 7-phosphate. It participates in carbohydrate biosynthesis; D-glycero-D-manno-heptose 7-phosphate biosynthesis; D-glycero-alpha-D-manno-heptose 7-phosphate and D-glycero-beta-D-manno-heptose 7-phosphate from sedoheptulose 7-phosphate: step 1/1. Catalyzes the isomerization of sedoheptulose 7-phosphate in D-glycero-D-manno-heptose 7-phosphate. The chain is Phosphoheptose isomerase from Bradyrhizobium sp. (strain BTAi1 / ATCC BAA-1182).